The sequence spans 429 residues: Tyrosine--tRNA ligase (429 aa).

Tyr-36 is an L-tyrosine binding site. The 'HIGH' region signature appears at 41–50 (PTAASLHAGH). L-tyrosine is bound by residues Tyr-171 and Gln-175. A 'KMSKS' region motif is present at residues 231-235 (KFGKS). Residue Lys-234 coordinates ATP. Residues 360 to 417 (ATIVDLLVATGLAESRGAARRTVNEGGAAVNNQKIADPDWTPADGDYLHGRWLVVRRG) form the S4 RNA-binding domain.

The protein belongs to the class-I aminoacyl-tRNA synthetase family. TyrS type 1 subfamily. Homodimer.

Its subcellular location is the cytoplasm. It carries out the reaction tRNA(Tyr) + L-tyrosine + ATP = L-tyrosyl-tRNA(Tyr) + AMP + diphosphate + H(+). Catalyzes the attachment of tyrosine to tRNA(Tyr) in a two-step reaction: tyrosine is first activated by ATP to form Tyr-AMP and then transferred to the acceptor end of tRNA(Tyr). In Nocardia farcinica (strain IFM 10152), this protein is Tyrosine--tRNA ligase.